Consider the following 450-residue polypeptide: MTHIKFDYSKALRFFEERELDYLEPAVKAAHDSLHNGTGAGNDALGWINLPTDYDKEEFARIKKATEKIHSDSDVLIVIGIGGSYLGARAAIETLNHSFYNVLEKGARKTPQVFFAGNSISSSYLHDLIEVVGDRDFSVNVISKSGTTTEPAIAFRVFKELLIKKYGEEGAKKRIYATTDKAKGALKTLADNEGYETFVVPDDVGGRFSVLTAVGLLPIAVSGVDIDALMNGAAAASKDFDKPELKNNIAYQYAAARNVLYRKGKVTELLISYEPGLQYFNEWWKQLFGESEGKDKKGIYPSSANFSTDLHSIGQYIQDGRRNLFETVIKVDKPRHNLTINKEEVDLDGLNYLAGETVDFVNTKAFEGTLLAHTDGEVPNFVVEVPELDAYTFGYLVYFFEKAVAISGYLNGVNPFDQPGVEAYKANMFALLGKPGFEDKKAELEKRLND.

Glu-290 functions as the Proton donor in the catalytic mechanism. Catalysis depends on residues His-311 and Lys-425.

It belongs to the GPI family.

The protein localises to the cytoplasm. It carries out the reaction alpha-D-glucose 6-phosphate = beta-D-fructose 6-phosphate. The protein operates within carbohydrate biosynthesis; gluconeogenesis. Its pathway is carbohydrate degradation; glycolysis; D-glyceraldehyde 3-phosphate and glycerone phosphate from D-glucose: step 2/4. Functionally, catalyzes the reversible isomerization of glucose-6-phosphate to fructose-6-phosphate. The protein is Glucose-6-phosphate isomerase of Listeria innocua serovar 6a (strain ATCC BAA-680 / CLIP 11262).